The primary structure comprises 555 residues: Urocanate hydratase (555 aa).

Residues Gly52–Gly53, Gln130, Gly176–Gly178, Glu196, Arg201, Asn242–Ala243, Gln263–His267, Tyr272–Leu273, and Tyr321 contribute to the NAD(+) site. Cys409 is a catalytic residue. Gly491 contacts NAD(+).

Belongs to the urocanase family. The cofactor is NAD(+).

Its subcellular location is the cytoplasm. The catalysed reaction is 4-imidazolone-5-propanoate = trans-urocanate + H2O. The protein operates within amino-acid degradation; L-histidine degradation into L-glutamate; N-formimidoyl-L-glutamate from L-histidine: step 2/3. Its function is as follows. Catalyzes the conversion of urocanate to 4-imidazolone-5-propionate. This is Urocanate hydratase from Nocardioides sp. (strain ATCC BAA-499 / JS614).